The following is a 606-amino-acid chain: MADAMNELCNLTQHLQVDDDQLSNLKLKNGYSLFPHQEKVMLWMKYRENLTKKECRKEGEKTWGVRGGIISLCMGLGKTLTALAYSFQNKASFPTLVITSKTVMHEWKTEGVEKFFDSDNIRVLYLHRDYIKNIDKISRDDIMTYDIVITTYDVCLFACKKGNYFLQCFEMGEEQSLMKNKIVAIHTRKRKDANLPNLKGTAVIYGTPWERVICDESQKFANPKTMTYKCIMAVYGKYKWCLTGTPIRNYETDIWAQLRFCGYKGVERSHDWNRNGQGLIAFKDHNLISAIFTMSYDDAQMSLPEKTENNLTVKLEGQHKEIYEGILTETREMYKKMMNDLCSFTYVLAMFTRLRQCAIAPYLITPDAKRNSKEKKNCSEWCLDKFGGAGIKSSKILKIVEIIKSVTLNDNPNCNSNPKSLQLLAKEKAYSCFGSDYIKSSNFEISHPTKIIVFSMFTSCLDLLSEAIKEDYPNFKFVQVDGDTKNRSELFDQFKNDINTQGLFLTYKVGSEGLNLTEATHCICIEPWWTNAVHNQAKARLWRTGQTKQVYVHNVIIEGSIEEKIVEICKGKDDMAASYLEGKERIKSPVRAPKLDKFTLGKMLGI.

Residues 59 to 264 enclose the Helicase ATP-binding domain; the sequence is GEKTWGVRGG…WAQLRFCGYK (206 aa). 72–79 provides a ligand contact to ATP; the sequence is LCMGLGKT. The region spanning 437–586 is the Helicase C-terminal domain; it reads YIKSSNFEIS…ASYLEGKERI (150 aa).

This sequence belongs to the SNF2/RAD54 helicase family.

This is Putative helicase 172L from Invertebrate iridescent virus 6 (IIV-6).